Here is a 150-residue protein sequence, read N- to C-terminus: Large ribosomal subunit protein bL9 (150 aa).

It belongs to the bacterial ribosomal protein bL9 family.

Functionally, binds to the 23S rRNA. The chain is Large ribosomal subunit protein bL9 from Wolinella succinogenes (strain ATCC 29543 / DSM 1740 / CCUG 13145 / JCM 31913 / LMG 7466 / NCTC 11488 / FDC 602W) (Vibrio succinogenes).